Here is a 558-residue protein sequence, read N- to C-terminus: MAYKSDIEIAREAKKRPIQEIGEKIGIGSDDLLPYGHDKAKVSQSFINSVQDKPNGRLVLVTAINPTPAGEGKTTTTVGLGDGLNHIGKNAMICIREASLGPNFGMKGGAAGGGYAQVVPMEDMNLHFTGDFHAITSAHSLLSAMIDNHIYWGNEAEIDVRRVQWRRVVDMNDRALRQITASLGGVANGFPREAGFDITVASEVMAILCLAKDLKDLEKRLGDMIVAYRRDRSPVFCRDIKAQGAMTVLLKDAMQPNLVQTLENNPAFVHGGPFANIAHGCNSVIATTTALKLADYVVTEAGFGADLGAEKFMNIKCRKAGIAPSVVVCVATVRAMKMNGGVAKADLGAENVDAVKKGCPNLGRHIENLKSFGVPVIVAINHFVTDTDAEVEAIKSYVSEHGAEAVLSRHWELGSEGSADLARKVVEVAEKDSANFAPIYPDDMPLAEKVQTIAKRIYRADEALMDKKVRDQLKLWEEQGYGHLPVCMAKTQYSFSTDPNLRGAPTGHSVPVREVRLSAGAGFVVVVCGEIMTMPGLPRVPSAENIHLNEDGQIEGLF.

An ATP-binding site is contributed by 67–74 (TPAGEGKT).

It belongs to the formate--tetrahydrofolate ligase family.

It catalyses the reaction (6S)-5,6,7,8-tetrahydrofolate + formate + ATP = (6R)-10-formyltetrahydrofolate + ADP + phosphate. It participates in one-carbon metabolism; tetrahydrofolate interconversion. In Roseobacter denitrificans (strain ATCC 33942 / OCh 114) (Erythrobacter sp. (strain OCh 114)), this protein is Formate--tetrahydrofolate ligase.